A 162-amino-acid chain; its full sequence is Regulatory protein RecX (162 aa).

This sequence belongs to the RecX family.

The protein resides in the cytoplasm. Functionally, modulates RecA activity. This chain is Regulatory protein RecX, found in Xanthomonas axonopodis pv. citri (strain 306).